Consider the following 116-residue polypeptide: Large ribosomal subunit protein bL19c (116 aa).

It belongs to the bacterial ribosomal protein bL19 family.

It localises to the plastid. It is found in the chloroplast. The chain is Large ribosomal subunit protein bL19c from Cyanidium caldarium (Red alga).